Here is a 1342-residue protein sequence, read N- to C-terminus: Zinc finger protein 335 (1342 aa).

Disordered stretches follow at residues 1-102 (MEEN…VTGG) and 201-228 (TSTS…AEEP). Positions 34 to 49 (AVSADSSDAAAAPGQA) are enriched in low complexity. Residues 201 to 217 (TSTSTCLEAQGGPSSPV) are compositionally biased toward polar residues. The C2H2-type 1 zinc finger occupies 245–268 (FKCKMCQYRSSTKATLLRHMRERH). Residues 274-442 (AAAAAAGKKG…TLPRRRGRPS (169 aa)) form a disordered region. Over residues 297–327 (EEGPEEEDDDDIVDAGAIDDLEEDSDYNPAE) the composition is skewed to acidic residues. Basic residues predominate over residues 346-357 (RPRRRPGRPRKL). 8 consecutive C2H2-type zinc fingers follow at residues 465–487 (FLCR…VNSH), 495–517 (FKCL…MFNH), 523–545 (YKCD…AAVH), 562–584 (FPCP…MKTH), 590–612 (HMCD…LLTH), 621–643 (FKCE…QLSH), 649–672 (FKCS…AVKH), and 678–701 (FACE…RCRH). Disordered regions lie at residues 732–763 (LKQQ…QSSE) and 964–1013 (CGGL…SAAT). The span at 740 to 753 (PGPPPSSPGPPEIP) shows a compositional bias: pro residues. A phosphoserine mark is found at Ser-976, Ser-992, and Ser-1007. Residues 986-997 (SQSSASSPPATS) are compositionally biased toward low complexity. C2H2-type zinc fingers lie at residues 1019 to 1041 (FSCK…KRAH), 1047 to 1069 (FKCP…MAQH), 1075 to 1097 (HQCS…MLTH), and 1103 to 1126 (FACH…QRLH). Lys-1022 is covalently cross-linked (Glycyl lysine isopeptide (Lys-Gly) (interchain with G-Cter in SUMO2)). The involved in the interaction with CCAR2 stretch occupies residues 1041-1342 (HAGPGAFKCP…EYDVITLADD (302 aa)). Ser-1153 bears the Phosphoserine mark.

Belongs to the krueppel C2H2-type zinc-finger protein family. Interacts with NCOA6; may enhance ligand-dependent transcriptional activation by nuclear hormone receptors. Interacts with CNOT6. Interacts with CNOT9; the interaction is direct. Component of a nuclear receptor-mediated transcription complex composed of at least ZNF335, CCAR2 and EMSY; the complex stimulates the transcription of nuclear receptor target genes such as SOX9 and HOXA1. Within the complex interacts with EMSY and interacts (via C-terminus) with CCAR2. Interacts with members of histone H3'Lys4'(H3K4) methyltransferase complexes ASH2L, CXXC1, KMT2A/MLL1, RBBP5, SETD1A and WDR5. Component of a histone methylation complex composed of at least ZNF335, RBBP5, ASH2L and WDR5; the complex may have histone H3-specific methyltransferase activity, however does not have specificity for 'Lys-4' of histone H3. Interacts with RBBP5 and WDR5. Interacts with ASHL2. Components of this complex may associate with components of the ZNF335-CCAR2-EMSY nuclear receptor-mediated transcription complex to form a complex at least composed of ZNF335, HCFC1, CCAR2, EMSY, MKI67, RBBP5, ASH2L and WDR5. Within this complex also interacts with HCFC1 and MKI67. As to expression, ubiquitously expressed.

Its subcellular location is the nucleus. Functionally, component or associated component of some histone methyltransferase complexes may regulate transcription through recruitment of those complexes on gene promoters. Enhances ligand-dependent transcriptional activation by nuclear hormone receptors. Plays an important role in neural progenitor cell proliferation and self-renewal through the regulation of specific genes involved brain development, including REST. Also controls the expression of genes involved in somatic development and regulates, for instance, lymphoblast proliferation. The protein is Zinc finger protein 335 (ZNF335) of Homo sapiens (Human).